A 139-amino-acid polypeptide reads, in one-letter code: ATP synthase epsilon chain (139 aa).

It belongs to the ATPase epsilon chain family. As to quaternary structure, F-type ATPases have 2 components, CF(1) - the catalytic core - and CF(0) - the membrane proton channel. CF(1) has five subunits: alpha(3), beta(3), gamma(1), delta(1), epsilon(1). CF(0) has three main subunits: a, b and c.

Its subcellular location is the cell inner membrane. Functionally, produces ATP from ADP in the presence of a proton gradient across the membrane. In Serratia proteamaculans (strain 568), this protein is ATP synthase epsilon chain.